The primary structure comprises 476 residues: Proline--tRNA ligase (476 aa).

This sequence belongs to the class-II aminoacyl-tRNA synthetase family. ProS type 3 subfamily. As to quaternary structure, homodimer.

The protein localises to the cytoplasm. The catalysed reaction is tRNA(Pro) + L-proline + ATP = L-prolyl-tRNA(Pro) + AMP + diphosphate. Functionally, catalyzes the attachment of proline to tRNA(Pro) in a two-step reaction: proline is first activated by ATP to form Pro-AMP and then transferred to the acceptor end of tRNA(Pro). This is Proline--tRNA ligase from Mycoplasmopsis pulmonis (strain UAB CTIP) (Mycoplasma pulmonis).